We begin with the raw amino-acid sequence, 237 residues long: Uridylate kinase (237 aa).

An ATP-binding site is contributed by 12–15; it reads KLSG. Residues 20-25 form an involved in allosteric activation by GTP region; it reads GENGYG. Position 54 (glycine 54) interacts with UMP. 2 residues coordinate ATP: glycine 55 and arginine 59. Residues aspartate 72 and 133-140 contribute to the UMP site; that span reads TGNPYFST. Tyrosine 166 and aspartate 169 together coordinate ATP.

The protein belongs to the UMP kinase family. In terms of assembly, homohexamer.

It is found in the cytoplasm. The catalysed reaction is UMP + ATP = UDP + ADP. It participates in pyrimidine metabolism; CTP biosynthesis via de novo pathway; UDP from UMP (UMPK route): step 1/1. With respect to regulation, allosterically activated by GTP. Inhibited by UTP. Functionally, catalyzes the reversible phosphorylation of UMP to UDP. The chain is Uridylate kinase from Clostridium tetani (strain Massachusetts / E88).